Here is a 164-residue protein sequence, read N- to C-terminus: Ubiquitin-fold modifier-conjugating enzyme 1 (164 aa).

The Glycyl thioester intermediate role is filled by Cys-116.

This sequence belongs to the ubiquitin-conjugating enzyme family. UFC1 subfamily.

Functionally, E2-like enzyme which forms an intermediate with UFM1 via a thioester linkage. This Drosophila sechellia (Fruit fly) protein is Ubiquitin-fold modifier-conjugating enzyme 1.